The sequence spans 712 residues: MATFLLEVGTEELPASFVESAIQQWRSHIPNSLEEHLLTPQSLKVYGTPRRLAILAEGLPDQQPDQTVEVKGPPAKAAFKDGKPTKAAEGFARKQGVEIKDFELRDTEKGEFIFVQKTTLGKPAVDVLADLIPTWIFSLEGKRFMRWSDGEVKFSRPIRWLVSLLDDHLIPIKLENSTGTISSDRTSSGHRVLHPDPVTIKHPQDYVATLEKASVQVDPEQRQTLIKEQVHACAKAVKGKAVISEDLLAEVTYLVEWPTAVVGGFESEFLELPAEVITTEMVSHQRYFPVEAPKGAKLLPHFITISNGDPAKSDIISSGNERVIRARLADGQFFYKADQAMPLAEYLPKLETVTFQEDLGSVRAKVDRIQANALWVAKQLQLDQKVTQQVERAAQLCKADLVTQMVGEFPELQGVMGEKYAIASGEPTEIATAIVEHYLPKGANDQLPQTLVGQIVGIADRLDTLVSIFGLGMIPTGSSDPFALRRAANAILNIVWAANLDLNLDQLLTETTAAFAQTFAKFQPEVQQLRDFFGQRLRSLLQDEQTIDYDLVNAVLGEKGEHTQRVLVDVLDGRDRAQYLQTIRTNGTLDTIYETVNRAARLATKGDLASDVLDPKGVVQPKLFEQSSEQVFYDGLLTLLPQTQAAQSSRDYQKLVQGLTKIAPSVSQFFDGDDSVLVIAEDADLRANRLNLLGLLRNHALVLGDFGAIVKS.

The protein belongs to the class-II aminoacyl-tRNA synthetase family. In terms of assembly, tetramer of two alpha and two beta subunits.

It localises to the cytoplasm. It catalyses the reaction tRNA(Gly) + glycine + ATP = glycyl-tRNA(Gly) + AMP + diphosphate. The sequence is that of Glycine--tRNA ligase beta subunit from Acaryochloris marina (strain MBIC 11017).